Reading from the N-terminus, the 229-residue chain is Putative ABC transporter permease protein ORF1 (229 aa).

The ABC transmembrane type-1 domain occupies 23–214 (ALNSLLVALA…LPSLAFFALV (192 aa)). 5 consecutive transmembrane segments (helical) span residues 27–47 (LLVA…MAYV), 62–82 (WVVV…FLVL), 91–111 (LTGL…WMLA), 150–170 (ATAL…LVLL), and 194–214 (SPAG…FALV).

Belongs to the binding-protein-dependent transport system permease family. MalFG subfamily.

It localises to the cell membrane. Its function is as follows. May participate in oleandomycin secretion during antibiotic production. The protein is Putative ABC transporter permease protein ORF1 of Streptomyces antibioticus.